The sequence spans 309 residues: Aspartate carbamoyltransferase catalytic subunit (309 aa).

Residues Arg57 and Thr58 each coordinate carbamoyl phosphate. Residue Lys86 coordinates L-aspartate. Residues Arg107, His135, and Gln138 each coordinate carbamoyl phosphate. The L-aspartate site is built by Arg168 and Arg229. Carbamoyl phosphate-binding residues include Leu269 and Pro270.

This sequence belongs to the aspartate/ornithine carbamoyltransferase superfamily. ATCase family. As to quaternary structure, heterooligomer of catalytic and regulatory chains.

The enzyme catalyses carbamoyl phosphate + L-aspartate = N-carbamoyl-L-aspartate + phosphate + H(+). It functions in the pathway pyrimidine metabolism; UMP biosynthesis via de novo pathway; (S)-dihydroorotate from bicarbonate: step 2/3. In terms of biological role, catalyzes the condensation of carbamoyl phosphate and aspartate to form carbamoyl aspartate and inorganic phosphate, the committed step in the de novo pyrimidine nucleotide biosynthesis pathway. The sequence is that of Aspartate carbamoyltransferase catalytic subunit from Methanopyrus kandleri (strain AV19 / DSM 6324 / JCM 9639 / NBRC 100938).